A 557-amino-acid chain; its full sequence is MTNTSYEKLVEVYEKISSTSSRLEKQDIIADFLMYIKETDADITYDITLLLQGKIFPPWSDKEMGISTQLIIKALSNLLGESTKSIENKLAEVGDMGEISEELIKNNKQVTFFKVPLTVKKVLSNLRKTESITGSKSQNKKINYLLELYTSASPLEAKYITRTITERLRIGVGEGTLVEAIAQAYNIDKEIIDRAYMLSNDLGEVASRAQESIESVKSLTITPGKPIKPMLAQLSPGIKESITEMKKVICETKYDGIRVQIHHYNNKTKIFTRRLENVTNALPEVVEYIEEALPSKDFIVEGEVIATKDNKPISFQYILQRVKRKYDIDKMREKIPLKVFLFDVLYYDKPTAELPIIQRRQLLEEIVTTSKNVELSTMKIVSQENYTEAEKLFTWSIDEGHEGIMFKDVTSPYSPGKRGKNMLKYKPLRETLDCVITGGTYGKGKRAKFFGSYLLSLLDEKTGEYKTLVHAATGMDDDLLASLTKRMEKLIISKSEQNVLFKPKVILEIAYSEIVESNEYESGYSLRFPAIKGVRDDIGLDEVDTLSKLHQMIDLQK.

Position 251 (Glu251) interacts with ATP. The active-site N6-AMP-lysine intermediate is Lys253. Arg258, Arg273, Glu303, Phe342, Arg418, and Lys424 together coordinate ATP.

Belongs to the ATP-dependent DNA ligase family. Mg(2+) serves as cofactor.

The catalysed reaction is ATP + (deoxyribonucleotide)n-3'-hydroxyl + 5'-phospho-(deoxyribonucleotide)m = (deoxyribonucleotide)n+m + AMP + diphosphate.. In terms of biological role, DNA ligase that seals nicks in double-stranded DNA during DNA replication, DNA recombination and DNA repair. This is DNA ligase from Methanosphaera stadtmanae (strain ATCC 43021 / DSM 3091 / JCM 11832 / MCB-3).